Reading from the N-terminus, the 247-residue chain is ATP synthase subunit a, chloroplastic (247 aa).

Transmembrane regions (helical) follow at residues Gln-38–Val-58, Val-95–Leu-115, Asp-133–Leu-153, Leu-199–Leu-219, and Gly-220–Gly-240.

Belongs to the ATPase A chain family. As to quaternary structure, F-type ATPases have 2 components, CF(1) - the catalytic core - and CF(0) - the membrane proton channel. CF(1) has five subunits: alpha(3), beta(3), gamma(1), delta(1), epsilon(1). CF(0) has four main subunits: a, b, b' and c.

It localises to the plastid. The protein resides in the chloroplast thylakoid membrane. Functionally, key component of the proton channel; it plays a direct role in the translocation of protons across the membrane. The sequence is that of ATP synthase subunit a, chloroplastic from Phalaenopsis aphrodite subsp. formosana (Moth orchid).